The primary structure comprises 283 residues: Phospholipase C (283 aa).

A signal peptide spans 1–24 (MKKKVLALAAAITVVAPLQSVAFA). Residues 25–38 (HENDGGSKIKIVHR) constitute a propeptide that is removed on maturation. Residues tryptophan 39, histidine 52, aspartate 93, histidine 107, histidine 156, aspartate 160, histidine 166, histidine 180, and glutamate 184 each contribute to the Zn(2+) site. The 245-residue stretch at 39-283 (WSAEDKHKEG…QLWFDTYGDR (245 aa)) folds into the Zn-dependent PLC domain.

It belongs to the bacterial zinc-metallophospholipase C family. Monomer. It depends on Zn(2+) as a cofactor.

The enzyme catalyses a 1,2-diacyl-sn-glycero-3-phosphocholine + H2O = phosphocholine + a 1,2-diacyl-sn-glycerol + H(+). Its function is as follows. Required, with sphingomyelinase, to effect target cell lysis (hemolysis). The polypeptide is Phospholipase C (plc) (Bacillus cereus).